A 383-amino-acid polypeptide reads, in one-letter code: Queuine tRNA-ribosyltransferase (383 aa).

Aspartate 89 (proton acceptor) is an active-site residue. Residues 89-93, aspartate 143, glutamine 187, and glycine 214 each bind substrate; that span reads DSGGF. Residues 245–251 form an RNA binding region; the sequence is GVGDLID. Aspartate 264 serves as the catalytic Nucleophile. The RNA binding; important for wobble base 34 recognition stretch occupies residues 269-273; the sequence is TRNAR. Positions 302, 304, 307, and 333 each coordinate Zn(2+).

It belongs to the queuine tRNA-ribosyltransferase family. Homodimer. Within each dimer, one monomer is responsible for RNA recognition and catalysis, while the other monomer binds to the replacement base PreQ1. Zn(2+) serves as cofactor.

It carries out the reaction 7-aminomethyl-7-carbaguanine + guanosine(34) in tRNA = 7-aminomethyl-7-carbaguanosine(34) in tRNA + guanine. It functions in the pathway tRNA modification; tRNA-queuosine biosynthesis. Its function is as follows. Catalyzes the base-exchange of a guanine (G) residue with the queuine precursor 7-aminomethyl-7-deazaguanine (PreQ1) at position 34 (anticodon wobble position) in tRNAs with GU(N) anticodons (tRNA-Asp, -Asn, -His and -Tyr). Catalysis occurs through a double-displacement mechanism. The nucleophile active site attacks the C1' of nucleotide 34 to detach the guanine base from the RNA, forming a covalent enzyme-RNA intermediate. The proton acceptor active site deprotonates the incoming PreQ1, allowing a nucleophilic attack on the C1' of the ribose to form the product. After dissociation, two additional enzymatic reactions on the tRNA convert PreQ1 to queuine (Q), resulting in the hypermodified nucleoside queuosine (7-(((4,5-cis-dihydroxy-2-cyclopenten-1-yl)amino)methyl)-7-deazaguanosine). In Thermodesulfovibrio yellowstonii (strain ATCC 51303 / DSM 11347 / YP87), this protein is Queuine tRNA-ribosyltransferase.